Reading from the N-terminus, the 740-residue chain is Vacuolar protein sorting-associated protein 51 homolog (740 aa).

Coiled coils occupy residues 65 to 87 (SATD…VNLL) and 322 to 344 (RALD…LEVQ).

The protein belongs to the VPS51 family. Component of the Golgi-associated retrograde protein (GARP) complex.

May act as a component of the GARP complex that is involved in retrograde transport from early and late endosomes to the trans-Golgi network (TGN). This chain is Vacuolar protein sorting-associated protein 51 homolog, found in Drosophila melanogaster (Fruit fly).